A 235-amino-acid chain; its full sequence is N-alpha-acetyltransferase 10 (235 aa).

Met1 bears the N-acetylmethionine mark. Positions 1-58 (MNIRNARPEDLMNMQHCNLLCLPENYQMKYYFYHGLSWPQLSYIAEDENGKIVGYVLA) are interaction with NAA15. An N-acetyltransferase domain is found at 1–152 (MNIRNARPED…DAYAMKRDLT (152 aa)). At Lys136 the chain carries N6-acetyllysine; by autocatalysis. Basic and acidic residues predominate over residues 196 to 213 (EEKGLAAEDSGGDSKDLS). The tract at residues 196–235 (EEKGLAAEDSGGDSKDLSEVSETTESTDVKDSSEASDSAS) is disordered. Ser205 bears the Phosphoserine mark. At Ser209 the chain carries Phosphoserine; by IKKB. Ser213 and Ser216 each carry phosphoserine.

The protein belongs to the acetyltransferase family. ARD1 subfamily. As to quaternary structure, component of the N-terminal acetyltransferase A complex (also called the NatA complex) composed of NAA10 and NAA15. Interacts with NAA15. Component of the N-terminal acetyltransferase A (NatA)/HYPK complex at least composed of NAA10, NAA15 and HYPK, which has N-terminal acetyltransferase activity. In complex with NAA15, interacts with HYPK. Component of the N-terminal acetyltransferase E (NatE) complex at least composed of NAA10, NAA15 and NAA50. Within the complex interacts with NAA15; the interaction is required for binding to NAAT50. Interacts with NAAT50. The interaction of the NatA complex with NAA50 reduces the acetylation activity of the NatA complex. Component of the N-terminal acetyltransferase E (NatE)/HYPK complex at least composed of NAA10, NAA15, NAA50 and HYPK. In complex with NAA15, interacts with HYPK; the interaction with HYPK reduces the capacity of the NatA complex to interact with NAA50. Interacts with HIF1A (via its ODD domain); the interaction increases HIF1A protein stability during normoxia, an down-regulates it when induced by hypoxia. Interacts with the ribosome. Binds to MYLK. Interacts with NAA16. Interacts (via its C-terminal domain) with TSC2, leading to its acetylation. Interacts with IKBKB. Interacts with HSPA1A and HSPA1B leading to its acetylation. In terms of processing, cleaved by caspases during apoptosis. Phosphorylation by IKBKB/IKKB at Ser-209 destabilises NAA10 and promotes its proteasome-mediated degradation. Post-translationally, autoacetylated at Lys-136 which stimulates its catalytic activity. In terms of tissue distribution, ubiquitous.

The protein resides in the cytoplasm. It localises to the nucleus. The catalysed reaction is N-terminal glycyl-[protein] + acetyl-CoA = N-terminal N(alpha)-acetylglycyl-[protein] + CoA + H(+). It carries out the reaction N-terminal L-alanyl-[protein] + acetyl-CoA = N-terminal N(alpha)-acetyl-L-alanyl-[protein] + CoA + H(+). The enzyme catalyses N-terminal L-seryl-[protein] + acetyl-CoA = N-terminal N(alpha)-acetyl-L-seryl-[protein] + CoA + H(+). It catalyses the reaction N-terminal L-valyl-[protein] + acetyl-CoA = N-terminal N(alpha)-acetyl-L-valyl-[protein] + CoA + H(+). The catalysed reaction is N-terminal L-cysteinyl-[protein] + acetyl-CoA = N-terminal N(alpha)-acetyl-L-cysteinyl-[protein] + CoA + H(+). It carries out the reaction N-terminal L-threonyl-[protein] + acetyl-CoA = N-terminal N(alpha)-acetyl-L-threonyl-[protein] + CoA + H(+). Its function is as follows. Catalytic subunit of the N-terminal acetyltransferase A (NatA) complex which displays alpha (N-terminal) acetyltransferase activity. Acetylates amino termini that are devoid of initiator methionine. The alpha (N-terminal) acetyltransferase activity may be important for vascular, hematopoietic and neuronal growth and development. Without NAA15, displays epsilon (internal) acetyltransferase activity towards HIF1A, thereby promoting its degradation. Represses MYLK kinase activity by acetylation, and thus represses tumor cell migration. Acetylates, and stabilizes TSC2, thereby repressing mTOR activity and suppressing cancer development. Acetylates HSPA1A and HSPA1B at 'Lys-77' which enhances its chaperone activity and leads to preferential binding to co-chaperone HOPX. Acetylates HIST1H4A. Acts as a negative regulator of sister chromatid cohesion during mitosis. This Mus musculus (Mouse) protein is N-alpha-acetyltransferase 10 (Naa10).